A 2123-amino-acid chain; its full sequence is Bromodomain adjacent to zinc finger domain protein 2B (2123 aa).

Disordered stretches follow at residues 1 to 129 (MESG…VNGT), 144 to 306 (TPAS…LSQQ), 357 to 402 (PSPD…EMGK), 473 to 534 (NENV…HPHP), 546 to 691 (RGTD…RRVA), 756 to 793 (RAMD…GSAE), and 937 to 960 (ARKK…LNKE). Low complexity predominate over residues 7-46 (LPSSPASSTTPTSSSAPSVASAVSKSSLSTGAASLSSTAS). Over residues 83–95 (FFPPLLGIPPLFA) the composition is skewed to pro residues. Over residues 100-116 (NHDSSFHSRTSGKSSRN) the composition is skewed to polar residues. Composition is skewed to low complexity over residues 147–157 (SSSMGQNQSTS) and 193–216 (ESSS…ISSS). Residues 217–243 (DSDDLEEEEEEDQSVEESEDDDSDSET) show a composition bias toward acidic residues. The segment covering 259-277 (SDPKTDGQKATEKAQERRT) has biased composition (basic and acidic residues). 2 stretches are compositionally biased toward low complexity: residues 291–306 (PPFQ…LSQQ) and 366–379 (NKNT…LTSE). The span at 473–502 (NENVSSSTPFSSPVNLSTSGRRAPGSQTPA) shows a compositional bias: polar residues. Over residues 546–559 (RGTDSDVPSSKDSE) the composition is skewed to basic and acidic residues. Positions 560–587 (DSNEDEEEDDEEEDEEDDEDDESDDSQS) are enriched in acidic residues. The segment covering 588-597 (ESDSNSQSDS) has biased composition (low complexity). The span at 598-615 (EGSEDDEEKDQEESDSDT) shows a compositional bias: acidic residues. Composition is skewed to low complexity over residues 628-637 (SSSAKSPPSS) and 671-683 (TSSS…PHSG). The region spanning 690–765 (VADDQELRIP…RAMDGRRGRP (76 aa)) is the MBD domain. Residues 756–778 (RAMDGRRGRPPNPDRPRAREESR) show a composition bias toward basic and acidic residues. One can recognise a DDT domain in the interval 1004–1069 (GTTFSDCLMV…LSAAVCDPGL (66 aa)). 4 disordered regions span residues 1183–1260 (RDAS…QTAS), 1396–1444 (PPES…KTDA), 1499–1526 (TLVT…SSVQ), and 1588–1614 (FLTS…AQPV). Over residues 1214 to 1238 (SDYDDDDDDDSDDQADEDEEDEEDK) the composition is skewed to acidic residues. A compositionally biased stretch (basic and acidic residues) spans 1239–1248 (DDKKGKKTDI). Residues 1254-1281 (EGDQTASVEELEKQIEKLSKQQSQYRRK) are a coiled coil. 2 stretches are compositionally biased toward polar residues: residues 1408–1422 (NVST…QNSG) and 1430–1444 (PSAT…KTDA). Pro residues predominate over residues 1505-1515 (SQPPSKSPSPA). Residues 1588–1600 (FLTSSVASSKSDS) show a composition bias toward low complexity. The segment at 1886-1936 (KVYCQICRKGDNEELLLLCDGCDKGCHTYCHRPKITTIPDGDWFCPACISK) adopts a PHD-type zinc-finger fold. The disordered stretch occupies residues 1949–2013 (VKGKKTNDSK…AESTTSIKKP (65 aa)). Basic and acidic residues predominate over residues 1984–1995 (GSKELKKRKMEE). Polar residues predominate over residues 1996 to 2010 (TTSLNLSKAESTTSI). In terms of domain architecture, Bromo spans 2015 to 2119 (KDESRDLALC…KYFEKKWTDT (105 aa)).

Belongs to the WAL family. Component of the BRF-1 ISWI chromatin remodeling complex, at least composed of SMARCA1 and BAZ2B, which regulates the spacing of histone octamers on the DNA template to facilitate access to DNA. Within the BRF-1 ISWI chromatin remodeling complex interacts with SMARCA1; the interaction is direct. Component of the BRF-5 ISWI chromatin remodeling complex, at least composed of SMARCA5/SNF2H and BAZ2B, which regulates the spacing of histone octamers on the DNA template to facilitate access to DNA. Within the BRF-5 ISWI chromatin remodeling complex interacts with SMARCA5/SNF2H; the interaction is direct. Interacts with acetylated lysine residues on histone H1.4, H2A, H2B, H3 and H4 (in vitro). Interacts with EHMT1.

The protein localises to the nucleus. Functionally, regulatory subunit of the ATP-dependent BRF-1 and BRF-5 ISWI chromatin remodeling complexes, which form ordered nucleosome arrays on chromatin and facilitate access to DNA during DNA-templated processes such as DNA replication, transcription, and repair. Both complexes regulate the spacing of nucleosomes along the chromatin and have the ability to slide mononucleosomes to the center of a DNA template. The BRF-1 ISWI chromatin remodeling complex has a lower ATP hydrolysis rate than the BRF-5 ISWI chromatin remodeling complex. Chromatin reader protein, involved in positively modulating the rate of age-related behavioral deterioration. Represses the expression of mitochondrial function-related genes, perhaps by occupying their promoter regions, working in concert with histone methyltransferase EHMT1. The polypeptide is Bromodomain adjacent to zinc finger domain protein 2B (Mus musculus (Mouse)).